Consider the following 463-residue polypeptide: Glutamate--tRNA ligase (463 aa).

Residues 10 to 20 (PSPTGHLHIGG) carry the 'HIGH' region motif. Residues 236-240 (KLSKR) carry the 'KMSKS' region motif. Lys239 lines the ATP pocket.

Belongs to the class-I aminoacyl-tRNA synthetase family. Glutamate--tRNA ligase type 1 subfamily. In terms of assembly, monomer.

The protein resides in the cytoplasm. The enzyme catalyses tRNA(Glu) + L-glutamate + ATP = L-glutamyl-tRNA(Glu) + AMP + diphosphate. In terms of biological role, catalyzes the attachment of glutamate to tRNA(Glu) in a two-step reaction: glutamate is first activated by ATP to form Glu-AMP and then transferred to the acceptor end of tRNA(Glu). The chain is Glutamate--tRNA ligase from Nitratidesulfovibrio vulgaris (strain ATCC 29579 / DSM 644 / CCUG 34227 / NCIMB 8303 / VKM B-1760 / Hildenborough) (Desulfovibrio vulgaris).